An 89-amino-acid polypeptide reads, in one-letter code: Small ribosomal subunit protein uS15 (89 aa).

It belongs to the universal ribosomal protein uS15 family. Part of the 30S ribosomal subunit. Forms a bridge to the 50S subunit in the 70S ribosome, contacting the 23S rRNA.

One of the primary rRNA binding proteins, it binds directly to 16S rRNA where it helps nucleate assembly of the platform of the 30S subunit by binding and bridging several RNA helices of the 16S rRNA. Functionally, forms an intersubunit bridge (bridge B4) with the 23S rRNA of the 50S subunit in the ribosome. This is Small ribosomal subunit protein uS15 from Nostoc punctiforme (strain ATCC 29133 / PCC 73102).